Here is a 124-residue protein sequence, read N- to C-terminus: Small ribosomal subunit protein bS6 (124 aa).

The interval 99-124 is disordered; that stretch reads PLPAPRIVPGSEPEPVEQQEAAAVEA. Over residues 114–124 the composition is skewed to low complexity; that stretch reads VEQQEAAAVEA.

Belongs to the bacterial ribosomal protein bS6 family.

Binds together with bS18 to 16S ribosomal RNA. In Prochlorococcus marinus (strain MIT 9303), this protein is Small ribosomal subunit protein bS6.